A 425-amino-acid polypeptide reads, in one-letter code: Glutamyl-tRNA reductase (425 aa).

Residues T49–R52, S107, E112–Q114, and Q118 contribute to the substrate site. C50 functions as the Nucleophile in the catalytic mechanism. G187–I192 contacts NADP(+).

It belongs to the glutamyl-tRNA reductase family. In terms of assembly, homodimer.

The enzyme catalyses (S)-4-amino-5-oxopentanoate + tRNA(Glu) + NADP(+) = L-glutamyl-tRNA(Glu) + NADPH + H(+). The protein operates within porphyrin-containing compound metabolism; protoporphyrin-IX biosynthesis; 5-aminolevulinate from L-glutamyl-tRNA(Glu): step 1/2. Its function is as follows. Catalyzes the NADPH-dependent reduction of glutamyl-tRNA(Glu) to glutamate 1-semialdehyde (GSA). This Pseudomonas putida (strain ATCC 47054 / DSM 6125 / CFBP 8728 / NCIMB 11950 / KT2440) protein is Glutamyl-tRNA reductase.